A 130-amino-acid chain; its full sequence is Histone H2A type 4 (130 aa).

At serine 2 the chain carries Phosphoserine; by RPS6KA5. Position 4 is a citrulline; alternate (arginine 4). Arginine 4 bears the Symmetric dimethylarginine; by PRMT5; alternate mark. N6-(2-hydroxyisobutyryl)lysine; alternate is present on residues lysine 6 and lysine 10. An N6-acetyllysine; alternate mark is found at lysine 6 and lysine 10. An N6-lactoyllysine; alternate modification is found at lysine 10. Residues lysine 75, lysine 76, and lysine 96 each carry the N6-(2-hydroxyisobutyryl)lysine modification. Lysine 96 is subject to N6-glutaryllysine; alternate. Glutamine 105 carries the N5-methylglutamine modification. Lysine 119 is modified (N6-(2-hydroxyisobutyryl)lysine; alternate). Lysine 119 and lysine 120 each carry N6-glutaryllysine; alternate. Lysine 119 is modified (N6-crotonyllysine; alternate). N6-crotonyllysine is present on lysine 120. Threonine 121 is subject to Phosphothreonine; by DCAF1. Residue lysine 126 is modified to N6-glutaryllysine; alternate. N6-crotonyllysine; alternate is present on lysine 126. The short motif at 127 to 128 is the [ST]-Q motif element; sequence SQ.

The protein belongs to the histone H2A family. In terms of assembly, the nucleosome is a histone octamer containing two molecules each of H2A, H2B, H3 and H4 assembled in one H3-H4 heterotetramer and two H2A-H2B heterodimers. The octamer wraps approximately 147 bp of DNA. Post-translationally, deiminated on Arg-4 in granulocytes upon calcium entry. In terms of processing, monoubiquitination of Lys-120 (H2AK119Ub) by RING1, TRIM37 and RNF2/RING2 complex gives a specific tag for epigenetic transcriptional repression and participates in X chromosome inactivation of female mammals. It is involved in the initiation of both imprinted and random X inactivation. Ubiquitinated H2A is enriched in inactive X chromosome chromatin. Ubiquitination of H2A functions downstream of methylation of 'Lys-27' of histone H3 (H3K27me). H2AK119Ub by RNF2/RING2 can also be induced by ultraviolet and may be involved in DNA repair. Following DNA double-strand breaks (DSBs), it is ubiquitinated through 'Lys-63' linkage of ubiquitin moieties by the E2 ligase UBE2N and the E3 ligases RNF8 and RNF168, leading to the recruitment of repair proteins to sites of DNA damage. Ubiquitination at Lys-14 and Lys-16 (H2AK13Ub and H2AK15Ub, respectively) in response to DNA damage is initiated by RNF168 that mediates monoubiquitination at these 2 sites, and 'Lys-63'-linked ubiquitin are then conjugated to monoubiquitin; RNF8 is able to extend 'Lys-63'-linked ubiquitin chains in vitro. H2AK119Ub and ionizing radiation-induced 'Lys-63'-linked ubiquitination (H2AK13Ub and H2AK15Ub) are distinct events. Phosphorylation on Ser-2 (H2AS1ph) is enhanced during mitosis. Phosphorylation on Ser-2 by RPS6KA5/MSK1 directly represses transcription. Acetylation of H3 inhibits Ser-2 phosphorylation by RPS6KA5/MSK1. Phosphorylation at Thr-121 (H2AT120ph) by DCAF1 is present in the regulatory region of many tumor suppresor genes and down-regulates their transcription. Post-translationally, symmetric dimethylation on Arg-4 by the PRDM1/PRMT5 complex may play a crucial role in the germ-cell lineage. In terms of processing, glutamine methylation at Gln-105 (H2AQ104me) by FBL is specifically dedicated to polymerase I. It is present at 35S ribosomal DNA locus and impairs binding of the FACT complex. Crotonylation (Kcr) is specifically present in male germ cells and marks testis-specific genes in post-meiotic cells, including X-linked genes that escape sex chromosome inactivation in haploid cells. Crotonylation marks active promoters and enhancers and confers resistance to transcriptional repressors. It is also associated with post-meiotically activated genes on autosomes. Post-translationally, lactylated in macrophages by EP300/P300 by using lactoyl-CoA directly derived from endogenous or exogenous lactate, leading to stimulates gene transcription. Testis.

It is found in the nucleus. It localises to the chromosome. In terms of biological role, core component of nucleosome. Nucleosomes wrap and compact DNA into chromatin, limiting DNA accessibility to the cellular machineries which require DNA as a template. Histones thereby play a central role in transcription regulation, DNA repair, DNA replication and chromosomal stability. DNA accessibility is regulated via a complex set of post-translational modifications of histones, also called histone code, and nucleosome remodeling. The protein is Histone H2A type 4 of Rattus norvegicus (Rat).